A 710-amino-acid polypeptide reads, in one-letter code: MSSIRKKDVERFILSDDYKPMVLKELYKKFRAKTREQRKKVREVVKKLEKEGRIFRDSRGRYRKLGEDLKVGTIEFTRSGYVAFVITDDFEEIAVPVEDTKYAMHKDRVVVEITGTWRGLPRGRVVRVLERGLKRVVGVFDHKGTFGFVVPDDPKIAYDFYVAPENIDGAKPNQKVIAEILKYPSPGKNPEAKVVKVLGDLDDPSIDLPSVIVKHDLPEPGEFPEEVIREANAIPARVRKKDLVGRKDLRDKVIVTIDGEDAKDFDDAISVEKLPNGNYLLGVHIADVSHYVKEGSALDQEAFKRGTSVYLIDTVIPMLPFRLSNGICSLVEGKDRLTMSVEMEIDRDGRVVRYDVYPSVIKSKKRMIYERVNEFLEDPSSMKEYEPFKDLIYNAVELAEILREARRKRGAILDIESDEVKVILDENGQVVDIVPRKRGIAEKLIEEFMIRANETVAEIFDHAGLPFMYRVHEEPDPETIFQLKNYLEAMGIRAKFSHKIHPGMLQKLLEKVKDHPLRSSVERLLVRSMKRAMYSAVNIGHFGLASYAYTHFTSPIRRYPDLVVHRLLKLYLEQNGYFTPEQIEKFSKVLPKIAKHCSRRERVADEAEWDLVAMKKVEYIARHIGEVFNVVVTNITKFGLFVEIPEKSISGLVHISTLDDYYYYDETRNMLIGKRKGKVFRLGDVLKAKVVRADKIRGEIDFVLVEEDEE.

The 328-residue stretch at arginine 246 to glutamate 573 folds into the RNB domain. Residues glycine 625–valine 705 form the S1 motif domain.

The protein belongs to the RNR ribonuclease family. RNase R subfamily.

It localises to the cytoplasm. The enzyme catalyses Exonucleolytic cleavage in the 3'- to 5'-direction to yield nucleoside 5'-phosphates.. In terms of biological role, 3'-5' exoribonuclease that releases 5'-nucleoside monophosphates and is involved in maturation of structured RNAs. The protein is Ribonuclease R of Thermotoga maritima (strain ATCC 43589 / DSM 3109 / JCM 10099 / NBRC 100826 / MSB8).